A 491-amino-acid chain; its full sequence is UDP-N-acetylmuramoyl-L-alanyl-D-glutamate--2,6-diaminopimelate ligase (491 aa).

Residue S30 participates in UDP-N-acetyl-alpha-D-muramoyl-L-alanyl-D-glutamate binding. 108–114 (GTNGKTT) is a binding site for ATP. UDP-N-acetyl-alpha-D-muramoyl-L-alanyl-D-glutamate-binding positions include N149, 150-151 (TT), S177, Q183, and R185. K217 is subject to N6-carboxylysine. Residues R383, 407–410 (DNPR), G458, and E462 each bind meso-2,6-diaminopimelate. The Meso-diaminopimelate recognition motif signature appears at 407–410 (DNPR).

It belongs to the MurCDEF family. MurE subfamily. The cofactor is Mg(2+). In terms of processing, carboxylation is probably crucial for Mg(2+) binding and, consequently, for the gamma-phosphate positioning of ATP.

The protein localises to the cytoplasm. The enzyme catalyses UDP-N-acetyl-alpha-D-muramoyl-L-alanyl-D-glutamate + meso-2,6-diaminopimelate + ATP = UDP-N-acetyl-alpha-D-muramoyl-L-alanyl-gamma-D-glutamyl-meso-2,6-diaminopimelate + ADP + phosphate + H(+). Its pathway is cell wall biogenesis; peptidoglycan biosynthesis. Catalyzes the addition of meso-diaminopimelic acid to the nucleotide precursor UDP-N-acetylmuramoyl-L-alanyl-D-glutamate (UMAG) in the biosynthesis of bacterial cell-wall peptidoglycan. This is UDP-N-acetylmuramoyl-L-alanyl-D-glutamate--2,6-diaminopimelate ligase from Listeria innocua serovar 6a (strain ATCC BAA-680 / CLIP 11262).